Consider the following 217-residue polypeptide: Transcription antitermination protein NusB (217 aa).

The protein belongs to the NusB family.

Functionally, involved in transcription antitermination. Required for transcription of ribosomal RNA (rRNA) genes. Binds specifically to the boxA antiterminator sequence of the ribosomal RNA (rrn) operons. In Microcystis aeruginosa (strain NIES-843 / IAM M-2473), this protein is Transcription antitermination protein NusB.